The sequence spans 737 residues: Glycogen [starch] synthase, muscle (737 aa).

Ser8 bears the Phosphoserine; by AMPK and PKA mark. Ser11 carries the post-translational modification Phosphoserine. UDP is bound at residue Lys39. Residues His205 and Arg211 each coordinate UDP-alpha-D-glucose. Residues His291, Glu292, Gln294, His297, and Lys301 each coordinate alpha-D-glucose 6-phosphate. A UDP-binding site is contributed by Arg331. Residue Arg331 coordinates UDP-alpha-D-glucose. Phosphoserine is present on Ser412. His501 lines the alpha-D-glucose 6-phosphate pocket. Positions 510, 512, and 513 each coordinate UDP-alpha-D-glucose. Thr515 contacts UDP. The alpha-D-glucose 6-phosphate site is built by Arg582 and Arg586. A disordered region spans residues 634-737 (YRYPRPASVP…PTSSLGEERN (104 aa)). The residue at position 641 (Ser641) is a Phosphoserine; by DYRK2, GSK3-alpha, GSK3-beta and PASK. Residues Ser645 and Ser649 each carry the phosphoserine; by GSK3-alpha and GSK3-beta modification. At Ser652 the chain carries Phosphoserine. Ser653 carries the post-translational modification Phosphoserine; by GSK3-alpha and GSK3-beta. Ser657 bears the Phosphoserine; by CK2 mark. The segment covering 658–681 (EDEEDPRNGPLEEDSERYDEDEEA) has biased composition (acidic residues). Ser672 is subject to Phosphoserine. Residues 682 to 695 (AKDRRNIRAPEWPR) show a composition bias toward basic and acidic residues. A Phosphoserine modification is found at Ser698. The span at 698–714 (SCTSSTSGSKRNSVDTA) shows a compositional bias: polar residues. Thr700 carries the post-translational modification Phosphothreonine. At Ser710 the chain carries Phosphoserine. Residues 715–737 (TSSSLSTPSEPLSPTSSLGEERN) are compositionally biased toward low complexity. Thr721 bears the Phosphothreonine mark. A phosphoserine mark is found at Ser727 and Ser731.

This sequence belongs to the glycosyltransferase 3 family. As to quaternary structure, part of the GYS1-GYG1 complex, a heterooctamer composed of a tetramer of GYS1 and 2 dimers of GYG1, where each GYS1 protomer binds to one GYG1 subunit (via GYG1 C-terminus); the GYS1 tetramer may dissociate from GYG1 dimers to continue glycogen polymerization on its own. Post-translationally, phosphorylation at Ser-8 by AMPK inactivates the enzyme activity. Primed phosphorylation at Ser-657 (site 5) by CSNK2A1 and CSNK2A2 is required for inhibitory phosphorylation at Ser-641 (site 3a), Ser-645 (site 3b), Ser-649 (site 3c) and Ser-653 (site 4) by GSK3A an GSK3B. Phosphorylated at Ser-641 by PASK, leading to inactivation; phosphorylation by PASK is inhibited by glycogen. Phosphorylated at Ser-641 by DYRK2, leading to inactivation. Dephosphorylation at Ser-641 and Ser-645 by PP1 activates the enzyme.

The enzyme catalyses [(1-&gt;4)-alpha-D-glucosyl](n) + UDP-alpha-D-glucose = [(1-&gt;4)-alpha-D-glucosyl](n+1) + UDP + H(+). It functions in the pathway glycan biosynthesis; glycogen biosynthesis. With respect to regulation, allosteric activation by glucose-6-phosphate. Phosphorylation reduces the activity towards UDP-glucose. When in the non-phosphorylated state, glycogen synthase does not require glucose-6-phosphate as an allosteric activator; when phosphorylated it does. Its function is as follows. Glycogen synthase participates in the glycogen biosynthetic process along with glycogenin and glycogen branching enzyme. Extends the primer composed of a few glucose units formed by glycogenin by adding new glucose units to it. In this context, glycogen synthase transfers the glycosyl residue from UDP-Glc to the non-reducing end of alpha-1,4-glucan. This is Glycogen [starch] synthase, muscle (GYS1) from Macaca mulatta (Rhesus macaque).